We begin with the raw amino-acid sequence, 201 residues long: Nucleoside triphosphate pyrophosphatase (201 aa).

Asp77 serves as the catalytic Proton acceptor.

Belongs to the Maf family. A divalent metal cation serves as cofactor.

The protein localises to the cytoplasm. It carries out the reaction a ribonucleoside 5'-triphosphate + H2O = a ribonucleoside 5'-phosphate + diphosphate + H(+). The catalysed reaction is a 2'-deoxyribonucleoside 5'-triphosphate + H2O = a 2'-deoxyribonucleoside 5'-phosphate + diphosphate + H(+). Its function is as follows. Nucleoside triphosphate pyrophosphatase. May have a dual role in cell division arrest and in preventing the incorporation of modified nucleotides into cellular nucleic acids. This Rickettsia akari (strain Hartford) protein is Nucleoside triphosphate pyrophosphatase.